The sequence spans 139 residues: Large ribosomal subunit protein uL24 (139 aa).

Residues 1–25 (MKRNTNVSSSRRKSRKAHFTASSGE) are disordered.

It belongs to the universal ribosomal protein uL24 family.

This is Large ribosomal subunit protein uL24 (rpl26) from Dictyostelium discoideum (Social amoeba).